The primary structure comprises 227 residues: Ribonuclease 3 (227 aa).

Residues L4 to G126 form the RNase III domain. E39 contributes to the Mg(2+) binding site. D43 is a catalytic residue. Residues D112 and E115 each coordinate Mg(2+). E115 is an active-site residue. Positions D153–I226 constitute a DRBM domain.

The protein belongs to the ribonuclease III family. In terms of assembly, homodimer. It depends on Mg(2+) as a cofactor.

The protein localises to the cytoplasm. It carries out the reaction Endonucleolytic cleavage to 5'-phosphomonoester.. Digests double-stranded RNA. Involved in the processing of primary rRNA transcript to yield the immediate precursors to the large and small rRNAs (23S and 16S). Processes some mRNAs, and tRNAs when they are encoded in the rRNA operon. Processes pre-crRNA and tracrRNA of type II CRISPR loci if present in the organism. The polypeptide is Ribonuclease 3 (Haemophilus influenzae (strain 86-028NP)).